The sequence spans 1196 residues: Ice nucleation protein (1196 aa).

An octapeptide periodicity region spans residues 172-1147 (ATYGSTLSGD…LSAGEDSTLI (976 aa)). Disordered regions lie at residues 269-304 (GYGS…GYGS), 319-352 (GSTQ…GYGS), and 415-442 (GSTQ…GSNL). Composition is skewed to polar residues over residues 271–298 (GSTQ…GSNL) and 319–346 (GSTQ…GSNL).

It belongs to the bacterial ice nucleation protein family. As to quaternary structure, membrane environment or aggregation seems to be required for ice nucleation activity.

It localises to the cell outer membrane. Its function is as follows. Ice nucleation proteins enable bacteria to nucleate crystallization in supercooled water. This chain is Ice nucleation protein (inaV), found in Pseudomonas syringae.